Consider the following 341-residue polypeptide: Major histocompatibility complex class I-related protein 1 (341 aa).

The signal sequence occupies residues 1 to 22; sequence MGELMAFLLPLIIVLMVKHSDS. The interval 23–109 is alpha-1; it reads RTHSLRYFRL…KRLQRHYNHS (87 aa). The antigen-binding cleft stretch occupies residues 23–201; sequence RTHSLRYFRL…EYGKDTLQRT (179 aa). The Extracellular portion of the chain corresponds to 23 to 302; sequence RTHSLRYFRL…QESETIPLVM (280 aa). R31, S46, and K65 together coordinate 5-(2-oxoethylideneamino)-6-(D-ribitylamino)uracil. The 5-(2-oxopropylideneamino)-6-(D-ribitylamino)uracil site is built by R31, S46, and K65. Positions 31, 46, and 65 each coordinate 7-hydroxy-6-methyl-8-(1-D-ribityl)lumazine. 8-(9H-purin-6-yl)-2-oxa-8-azabicyclo[3.3.1]nona-3,6-diene-4,6-dicarbaldehyde is bound at residue R31. K65 and H80 together coordinate 8-(9H-purin-6-yl)-2-oxa-8-azabicyclo[3.3.1]nona-3,6-diene-4,6-dicarbaldehyde. K65 provides a ligand contact to 2-amino-4-oxopteridine-6-carbaldehyde. K65 provides a ligand contact to pyridoxal. A glycan (N-linked (GlcNAc...) asparagine) is linked at N107. Positions 110-201 are alpha-2; the sequence is GSHTYQRMIG…EYGKDTLQRT (92 aa). 5-(2-oxoethylideneamino)-6-(D-ribitylamino)uracil-binding residues include R116, Y174, and Q175. R116, Y174, and Q175 together coordinate 5-(2-oxopropylideneamino)-6-(D-ribitylamino)uracil. 7-hydroxy-6-methyl-8-(1-D-ribityl)lumazine-binding residues include R116, Y174, and Q175. Position 116 (R116) interacts with 8-(9H-purin-6-yl)-2-oxa-8-azabicyclo[3.3.1]nona-3,6-diene-4,6-dicarbaldehyde. 2 disulfides stabilise this stretch: C120-C183 and C222-C278. Residues 202-293 are alpha-3; it reads EPPLVRVNRK…GVHMVLQVPQ (92 aa). Residues 203–299 form the Ig-like C1-type domain; it reads PPLVRVNRKE…QVPQESETIP (97 aa). The segment at 294–302 is connecting peptide; the sequence is ESETIPLVM. Residues 303–323 form a helical membrane-spanning segment; it reads KAVSGSIVLVIVLAGVGVLVW. The Cytoplasmic segment spans residues 324–341; that stretch reads RRRPREQNGAIYLPTPDR.

It belongs to the MHC class I family. As to quaternary structure, heterotrimer that consists of MR1, B2M and a metabolite antigen. Major classes of metabolite ligands presented by MR1 include riboflavin-related antigens, pyrimidines and ribityl lumazines, nucleobase adducts and folate derivatives. Forms reversible covalent Schiff base complexes with microbial pyrimidine-based metabolite, which serves as a molecular switch triggering complete folding, stable association with B2M and translocation of the ternary complex from endoplasmic reticulum to the plasma membrane. Alternatively, forms non-Schiff base complexes with ribityl lumazines. On antigen-presenting cells, the ternary complex interacts with TCR on MR1-restricted T cells, predominantly represented by CD8-positive and CD4- and CD8-double negative MAIT cell subsets. Interacts with TAPBP and TAPBPL chaperones in the endoplasmic reticulum. TAPBP associated or not with MHC class I peptide loading complex binds ligand-free MR1 or MR1-B2M complex, providing for stable MR1 pools ready for metabolite antigen processing. TAPBPL interacts with MR1 in a ligand-independent way; this interaction may stabilize MR1 pool and facilitate ligand loading and dissociation. MR1-B2M heterodimer adopts a topology similar to classical MHC class I molecules, with alpha-1 and alpha-2 domains of MR1 forming the antigen-binding cleft composed of two alpha-helices resting on a floor of 7-stranded anti-parallel beta-pleated sheet. The ribityl moiety of pyrimidine-based antigens is recognized by Tyr-95 residue in the CDR3 alpha loop of the invariant TRAV1-2 TCR. In terms of assembly, homodimerizes and does not associate with B2M. N-glycosylated. In terms of tissue distribution, ubiquitous. Low expression is detected in peripheral blood B cells, T cells, monocytes and in bronchial epithelial cells (at protein level). Expressed in plasmablasts or plasma B cells in the lamina propria of ileum, appendix and colon (at protein level). Highly expressed on a subset of CD45-positive CD3-positive thymocytes (at protein level).

The protein resides in the cell membrane. The protein localises to the endoplasmic reticulum membrane. Its subcellular location is the golgi apparatus membrane. It is found in the early endosome membrane. It localises to the late endosome membrane. The protein resides in the secreted. With respect to regulation, inhibited by pterin-based metabolites such as 6-formylpterin (6-FP, a product of folic acid photodegradation). 6-FP competitively inhibits MAIT cell activation by 5-OP-RU. Modulated by commonly prescribed anti-inflammatory drug metabolites. Inhibited by salicilates such as 3-formylsalicylic and 5-formylsalicylic acids. Activated by diclofenac and/or its hydroxy metabolites. Its function is as follows. Antigen-presenting molecule specialized in displaying microbial pyrimidine-based metabolites to alpha-beta T cell receptors (TCR) on innate-type mucosal-associated invariant T (MAIT) cells. In complex with B2M preferentially presents riboflavin-derived metabolites to semi-invariant TRAV1.2 TCRs on MAIT cells, guiding immune surveillance of the microbial metabolome at mucosal epithelial barriers. Signature pyrimidine-based microbial antigens are generated via non-enzymatic condensation of metabolite intermediates of the riboflavin pathway with by-products arising from other metabolic pathways such as glycolysis. Typical potent antigenic metabolites are 5-(2-oxoethylideneamino)-6-D-ribitylaminouracil (5-OE-RU) and 5-(2-oxopropylideneamino)-6-D-ribitylaminouracil (5-OP-RU), products of condensation of 5-amino-6-D-ribityaminouracil (5-A-RU) with glyoxal or methylglyoxal by-products, respectively. May present microbial antigens to various TRAV1-2-negative MAIT cell subsets, providing for unique recognition of diverse microbes, including pathogens that do not synthesize riboflavin. Upon antigen recognition, elicits rapid innate-type MAIT cell activation to eliminate pathogenic microbes by directly killing infected cells. During T cell development, drives thymic selection and post-thymic terminal differentiation of MAIT cells in a process dependent on commensal microflora. Acts as an immune sensor of cancer cell metabolome. May present a tumor-specific or -associated metabolite essential for cancer cell survival to a 'pan-cancer' TCR consisting of TRAV38.2-DV8*TRAJ31 alpha chain paired with a TRBV25.1*TRBJ2.3 beta chain on a non-MAIT CD8-positive T cell clone (MC.7.G5), triggering T cell-mediated killing of a wide range of cancer cell types. Allele MR1*01: Presents microbial-derived metabolite 5-OP-RU to semi-invariant TRAV1.2-TRAJ33-TRBV6.1 (A-F7) TCR on MAIT cells. Presents nucleobase carbonyl adducts generated during oxidative stress. Captures M3Ade, a nucleobase adduct composed of one adenine modified by a malondialdehyde trimer, for recognition by MR1-restricted T cell clones expressing a polyclonal TCR repertoire. Displays moderate binding affinity toward tumor-enriched pyridoxal and pyridoxal 5'-phosphate antigens. Functionally, allele MR1*04: Presents tumor-enriched metabolite pyridoxal to pan-cancer 7.G5 TCR on T cells enabling preferential recognition of cancer cells. May act as an alloantigen. The sequence is that of Major histocompatibility complex class I-related protein 1 from Homo sapiens (Human).